A 495-amino-acid chain; its full sequence is Cobyric acid synthase (495 aa).

Residues 249–442 enclose the GATase cobBQ-type domain; that stretch reads KFIVKVPVVT…LHGVFDEPEA (194 aa). C330 (nucleophile) is an active-site residue. H434 is an active-site residue.

The protein belongs to the CobB/CobQ family. CobQ subfamily.

Its pathway is cofactor biosynthesis; adenosylcobalamin biosynthesis. Functionally, catalyzes amidations at positions B, D, E, and G on adenosylcobyrinic A,C-diamide. NH(2) groups are provided by glutamine, and one molecule of ATP is hydrogenolyzed for each amidation. This Aliivibrio fischeri (strain ATCC 700601 / ES114) (Vibrio fischeri) protein is Cobyric acid synthase.